The sequence spans 96 residues: uncharacterized protein (96 aa).

A helical transmembrane segment spans residues 53 to 71; that stretch reads VLLMPLLQSFVLSLALMGV.

The protein resides in the membrane. This is an uncharacterized protein from Saccharomyces cerevisiae (strain ATCC 204508 / S288c) (Baker's yeast).